A 238-amino-acid chain; its full sequence is Ribonuclease PH (238 aa).

Phosphate-binding positions include arginine 86 and 124-126 (GTR).

The protein belongs to the RNase PH family. In terms of assembly, homohexameric ring arranged as a trimer of dimers.

It carries out the reaction tRNA(n+1) + phosphate = tRNA(n) + a ribonucleoside 5'-diphosphate. Phosphorolytic 3'-5' exoribonuclease that plays an important role in tRNA 3'-end maturation. Removes nucleotide residues following the 3'-CCA terminus of tRNAs; can also add nucleotides to the ends of RNA molecules by using nucleoside diphosphates as substrates, but this may not be physiologically important. Probably plays a role in initiation of 16S rRNA degradation (leading to ribosome degradation) during starvation. This Haemophilus ducreyi (strain 35000HP / ATCC 700724) protein is Ribonuclease PH.